A 349-amino-acid chain; its full sequence is UPF0324 inner membrane protein YeiH (349 aa).

Over 1–12 (MTELTLQNHCRT) the chain is Periplasmic. A helical transmembrane segment spans residues 13 to 35 (MWHFIPGLALSAVITGVALWGGA). Over 36 to 38 (IPA) the chain is Cytoplasmic. A helical membrane pass occupies residues 39–61 (VAGAGFSALTLAILLGMVIGNTI). Residues 62–99 (YPQIWKQCDGGVLFAKQHLLRLGIILYGFRLTFSQIAD) are Periplasmic-facing. The helical transmembrane segment at 100-122 (VGISGIVIDVLTLSSTFMLACFL) threads the bilayer. The Cytoplasmic segment spans residues 123–131 (GQKVFGLDR). A helical membrane pass occupies residues 132–151 (HTSWLIGAGSSICGAAAVLA). Residues 152 to 162 (TEPVVKAEASK) are Periplasmic-facing. A helical membrane pass occupies residues 163–185 (VTVAVATVVIFGTIAIFLYPAMY). Residues 186–261 (PLLAHWFSPE…SPATGAEKSK (76 aa)) are Cytoplasmic-facing. A helical membrane pass occupies residues 262-284 (ITIPWFAIFFIVVAIFNSFHLLP). The Periplasmic segment spans residues 285 to 290 (KAVVDM). Residues 291–313 (LVTLDTVLLAMAMAALGLTTHVS) traverse the membrane as a helical segment. Residues 314-322 (ALKKAGAKP) are Cytoplasmic-facing. Residues 323–345 (LLMALALFAWLIIGGGAINVLIH) form a helical membrane-spanning segment. Residues 346–349 (SLIA) lie on the Periplasmic side of the membrane.

It belongs to the UPF0324 family.

The protein resides in the cell inner membrane. The sequence is that of UPF0324 inner membrane protein YeiH (yeiH) from Salmonella typhimurium (strain LT2 / SGSC1412 / ATCC 700720).